The sequence spans 428 residues: Gamma-glutamyl phosphate reductase (428 aa).

This sequence belongs to the gamma-glutamyl phosphate reductase family.

The protein resides in the cytoplasm. The enzyme catalyses L-glutamate 5-semialdehyde + phosphate + NADP(+) = L-glutamyl 5-phosphate + NADPH + H(+). Its pathway is amino-acid biosynthesis; L-proline biosynthesis; L-glutamate 5-semialdehyde from L-glutamate: step 2/2. Its function is as follows. Catalyzes the NADPH-dependent reduction of L-glutamate 5-phosphate into L-glutamate 5-semialdehyde and phosphate. The product spontaneously undergoes cyclization to form 1-pyrroline-5-carboxylate. The chain is Gamma-glutamyl phosphate reductase from Clostridium tetani (strain Massachusetts / E88).